Reading from the N-terminus, the 169-residue chain is S-ribosylhomocysteine lyase (169 aa).

Fe cation contacts are provided by H54, H58, and C128.

It belongs to the LuxS family. Homodimer. Fe cation serves as cofactor.

It carries out the reaction S-(5-deoxy-D-ribos-5-yl)-L-homocysteine = (S)-4,5-dihydroxypentane-2,3-dione + L-homocysteine. In terms of biological role, involved in the synthesis of autoinducer 2 (AI-2) which is secreted by bacteria and is used to communicate both the cell density and the metabolic potential of the environment. The regulation of gene expression in response to changes in cell density is called quorum sensing. Catalyzes the transformation of S-ribosylhomocysteine (RHC) to homocysteine (HC) and 4,5-dihydroxy-2,3-pentadione (DPD). This is S-ribosylhomocysteine lyase from Shewanella loihica (strain ATCC BAA-1088 / PV-4).